The chain runs to 600 residues: Probable methyltransferase PMT21 (600 aa).

Residues 1-16 are Cytoplasmic-facing; it reads MKYKDEKYEKAEKGSR. A helical; Signal-anchor for type II membrane protein transmembrane segment spans residues 17–37; sequence ILPKTVLLILLCGLSFYLGGL. Residues 38–600 lie on the Lumenal side of the membrane; sequence YCGKNIIEVS…YSSNASSETN (563 aa). Asn594 carries an N-linked (GlcNAc...) asparagine glycan.

This sequence belongs to the methyltransferase superfamily.

The protein localises to the endoplasmic reticulum membrane. The sequence is that of Probable methyltransferase PMT21 (ERD3) from Arabidopsis thaliana (Mouse-ear cress).